We begin with the raw amino-acid sequence, 163 residues long: Photosystem II extrinsic protein V (163 aa).

The signal sequence occupies residues 1–26; sequence MFRRLIGVVVATVLLSFQLLVGSATA. Residues C63, C66, H67, and H118 each contribute to the heme c site.

Belongs to the cytochrome c family. PsbV subfamily. PSII is composed of 1 copy each of membrane proteins PsbA, PsbB, PsbC, PsbD, PsbE, PsbF, PsbH, PsbI, PsbJ, PsbK, PsbL, PsbM, PsbT, PsbX, PsbY, PsbZ, Psb30/Ycf12, peripheral proteins PsbO, CyanoQ (PsbQ), PsbU, PsbV and a large number of cofactors. It forms dimeric complexes. Heme c is required as a cofactor.

The protein localises to the cellular thylakoid membrane. Functionally, one of the extrinsic, lumenal subunits of photosystem II (PSII). PSII is a light-driven water plastoquinone oxidoreductase, using light energy to abstract electrons from H(2)O, generating a proton gradient subsequently used for ATP formation. The extrinsic proteins stabilize the structure of photosystem II oxygen-evolving complex (OEC), the ion environment of oxygen evolution and protect the OEC against heat-induced inactivation. Low-potential cytochrome c that plays a role in the OEC of PSII. This chain is Photosystem II extrinsic protein V, found in Nostoc punctiforme (strain ATCC 29133 / PCC 73102).